We begin with the raw amino-acid sequence, 694 residues long: MTRTALVTTALPYANGPLHLGHLVGYIQADIWVRARRLRGDKTWFVCADDTHGTPIMLAAEKAGVTPEAFIANIQASHERDFAAFGVTFDHYDSTNSPVNRELTEAFYTKLEAAGHISRRSVAQFYDPAKGMFLPDRYIKGICPNCGSADQYGDNCEVCGATYAPTELKEPKSVISGATPELRDSEHFFFEVGHFDGFLREWLDGDVALPGVKAKLKEWLDAEGGLRAWDISRDAPYFGFQIPGQPGKYFYVWLDAPIGYLCSFKTLCAQMGEDFQAHLAAGTQTELHHFIGKDIVNFHGLFWPAVLHGTGHRAPTRLHVNGYLMVDGAKMSKSRGTFVMARTFLDVGLEPEALRYYFAAKSSGGVDDLDLNLGDFVARVNADLVGKFVNLASRCAGFIGKRFDGKLADALPDPAQYARFVEALAPIREAYERNDPASAIRQTMALADEANKYIDDTKPWVIAKQEGADAQLQSVCTQGLNLFRLLVAALKPILPRTAAEAEAFLSAPMTSWEDVSRPLTCHVIQPYTALFTRIDPKLIDAMTDASKDTMAAPAAPAATTKPAPSKADAAPAAVANPQSPTANPGFIGMDDFAKLDLRIGKVLVCEAVEGSDKLLRFELDAGELGKRQIFSGIRASYGEPETLVGRSVVFIANLAPRKMRFGISEGMILSAGFDGGTLALLDADAGAQPGMPVR.

Residues P12 to H22 carry the 'HIGH' region motif. 4 residues coordinate Zn(2+): C143, C146, C156, and C159. Residues K330–S334 carry the 'KMSKS' region motif. Residue K333 coordinates ATP. Positions A552–P577 are disordered. One can recognise a tRNA-binding domain in the interval D591–R694.

The protein belongs to the class-I aminoacyl-tRNA synthetase family. MetG type 1 subfamily. In terms of assembly, homodimer. Zn(2+) serves as cofactor.

The protein resides in the cytoplasm. It carries out the reaction tRNA(Met) + L-methionine + ATP = L-methionyl-tRNA(Met) + AMP + diphosphate. Is required not only for elongation of protein synthesis but also for the initiation of all mRNA translation through initiator tRNA(fMet) aminoacylation. This chain is Methionine--tRNA ligase, found in Xanthomonas campestris pv. campestris (strain B100).